The sequence spans 221 residues: Inositol phosphorylceramide synthase regulatory subunit KEI1 (221 aa).

A run of 4 helical transmembrane segments spans residues S11–L31, W54–I74, L79–F99, and I154–F174. The COPI vesicle-binding stretch occupies residues Q176–E221.

The protein belongs to the KEI1 family. Component of the inositol phosphorylceramide synthase complex composed of at least AUR1 and KEI1. Interacts (via C-terminal region) with COP1 and SEC21. Note=The interaction with AUR1 seems to occur with the full-length protein before cleavage by KEX2 since both full-length and short chains of KEI1 interact with AUR1. The precursor protein is cleaved into two polypeptide chains, KEI1N and KEI1C. The cleavage is performed in the Golgi apparatus by the KEX2 protease which recognizes residue Arg-135. Generation of KEX2 cleavage site may have been an accidental event in evolution without specific advantages or disadvantages in IPC synthesis.

It localises to the golgi apparatus membrane. Its function is as follows. Regulatory component of the inositol phosphorylceramide (ICP) synthase which catalyzes the addition of a phosphorylinositol group onto ceramide to form inositol phosphorylceramide, an essential step in sphingolipid biosynthesis. Helps the medial Golgi localization of IPC synthase in a COPI vesicle-dependent manner. This Saccharomyces cerevisiae (strain ATCC 204508 / S288c) (Baker's yeast) protein is Inositol phosphorylceramide synthase regulatory subunit KEI1 (KEI1).